Consider the following 252-residue polypeptide: DNA repair protein RecO (252 aa).

The protein belongs to the RecO family.

Functionally, involved in DNA repair and RecF pathway recombination. This is DNA repair protein RecO from Rhodospirillum rubrum (strain ATCC 11170 / ATH 1.1.1 / DSM 467 / LMG 4362 / NCIMB 8255 / S1).